The following is a 326-amino-acid chain: AA9 family lytic polysaccharide monooxygenase B (326 aa).

The signal sequence occupies residues 1–19; it reads MKSFTIAALAALWAQEAAA. His20 and His98 together coordinate Cu(2+). The cysteines at positions 57 and 192 are disulfide-linked. O2-binding residues include His178 and Gln187. Cu(2+) is bound at residue Tyr189. Low complexity predominate over residues 265-281; that stretch reads PSATLTQPTSTATATSA. The tract at residues 265–286 is disordered; it reads PSATLTQPTSTATATSAPGGGG. One can recognise a CBM1 domain in the interval 289–326; it reads CTAAKYQQCGGTGYTGCTTCASGSTCSAVSPPYYSQCL.

Belongs to the polysaccharide monooxygenase AA9 family. Cu(2+) serves as cofactor.

The protein resides in the secreted. It carries out the reaction [(1-&gt;4)-beta-D-glucosyl]n+m + reduced acceptor + O2 = 4-dehydro-beta-D-glucosyl-[(1-&gt;4)-beta-D-glucosyl]n-1 + [(1-&gt;4)-beta-D-glucosyl]m + acceptor + H2O.. Lytic polysaccharide monooxygenase (LPMO) that depolymerizes crystalline and amorphous polysaccharides via the oxidation of scissile alpha- or beta-(1-4)-glycosidic bonds, yielding C1 and C4 oxidation products. Catalysis by LPMOs requires the reduction of the active-site copper from Cu(II) to Cu(I) by a reducing agent and H(2)O(2) or O(2) as a cosubstrate. Shows no activity on wheat arabinoxylan, konjac glucomannan, acetylated spruce galactoglucomannan, or cellopentaose. In Thermothielavioides terrestris (strain ATCC 38088 / NRRL 8126) (Thielavia terrestris), this protein is AA9 family lytic polysaccharide monooxygenase B.